A 620-amino-acid chain; its full sequence is Glutathione-regulated potassium-efflux system protein KefC (620 aa).

12 consecutive transmembrane segments (helical) span residues 4-24 (HTLI…PIAV), 26-46 (LGLG…PWGL), 54-74 (SILH…GLEL), 90-110 (GALQ…LLGL), 114-134 (VAEL…MQAM), 149-169 (FAVL…IPLL), 178-198 (MGAF…VVLL), 218-238 (VFSA…EEVG), 270-290 (GLLL…GTLL), 294-314 (LRIV…LWLI), 327-347 (WFAV…GAAQ), and 359-379 (SLTL…VILN). Residues 399–518 (QPRVIIAGFG…AGVEKPERET (120 aa)) form the RCK N-terminal domain. The tract at residues 597–620 (GWQGTEEGKHTGNMADEPETKPSS) is disordered.

This sequence belongs to the monovalent cation:proton antiporter 2 (CPA2) transporter (TC 2.A.37) family. KefC subfamily. Homodimer. Interacts with the regulatory subunit KefF.

It is found in the cell inner membrane. Functionally, pore-forming subunit of a potassium efflux system that confers protection against electrophiles. Catalyzes K(+)/H(+) antiport. In Escherichia coli O8 (strain IAI1), this protein is Glutathione-regulated potassium-efflux system protein KefC.